The following is a 426-amino-acid chain: Dihydroorotase (426 aa).

His-59 and His-61 together coordinate Zn(2+). Residues 61 to 63 (HLR) and Asn-93 contribute to the substrate site. Positions 151, 178, and 232 each coordinate Zn(2+). Position 279 (Asn-279) interacts with substrate. Asp-306 contributes to the Zn(2+) binding site. Asp-306 is a catalytic residue. Residues His-310 and 324 to 325 (FG) contribute to the substrate site.

This sequence belongs to the metallo-dependent hydrolases superfamily. DHOase family. Class I DHOase subfamily. It depends on Zn(2+) as a cofactor.

It catalyses the reaction (S)-dihydroorotate + H2O = N-carbamoyl-L-aspartate + H(+). The protein operates within pyrimidine metabolism; UMP biosynthesis via de novo pathway; (S)-dihydroorotate from bicarbonate: step 3/3. Catalyzes the reversible cyclization of carbamoyl aspartate to dihydroorotate. The sequence is that of Dihydroorotase from Brevibacillus brevis (strain 47 / JCM 6285 / NBRC 100599).